The following is a 1096-amino-acid chain: Adenylate-forming reductase Nps9 (1096 aa).

The tract at residues 39–352 (DDTLTEISFL…TTEFGAPTQL (314 aa)) is adenylation (A) domain. AMP-binding positions include histidine 236, 339-340 (VQ), threonine 344, and 425-428 (IIGR). The region spanning 569–656 (EWTVSTLEHW…LLADRVAKIA (88 aa)) is the Carrier domain. O-(pantetheine 4'-phosphoryl)serine is present on serine 605. The tract at residues 716–952 (LTGSTGGLGS…MPAEKVSAAI (237 aa)) is reductase (R) domain. NADP(+)-binding positions include 720 to 723 (TGGL), 807 to 809 (SAW), tyrosine 880, and lysine 884.

The protein belongs to the adenylate-forming reductase family.

Functionally, adenylate-forming reductase, a natural product biosynthesis enzyme that resembles non-ribosomal peptide synthetases, yet serves to modify one substrate, rather than to condense two or more building blocks. The A-domain preferentially accepts L-threonine as substrate. The natural product of the enzyme is not yet known. This is Adenylate-forming reductase Nps9 from Serpula lacrymans var. lacrymans (strain S7.9) (Dry rot fungus).